A 165-amino-acid chain; its full sequence is GTPase activating protein 1 (165 aa).

One can recognise a C2 domain in the interval 1–105; it reads MLGHLVGLVK…VVKMKIEGVA (105 aa). Ca(2+)-binding residues include Arg22, Asp23, Asp28, Asp74, Lys75, Asp76, and Asp81.

It belongs to the plant CAR protein family. In terms of assembly, binds to PYR/PYL/RCAR abscisic acid intracellular receptors in an ABA-independent manner, both at the plasma membrane and in the nucleus. Binds phospholipids in a Ca(2+)-dependent manner. Interacts with YchF1.

The protein resides in the cell membrane. The protein localises to the nucleus. It localises to the cytoplasm. Its subcellular location is the cytosol. Mediates the transient calcium-dependent interaction of PYR/PYL/RCAR abscisic acid (ABA) receptors with the plasma membrane and thus regulates ABA sensitivity. Stimulates the GTPase/ATPase activities of YchF1, and regulates its subcellular localization. Promotes tolerance towards salinity stress by limiting the accumulation of reactive oxygen species (ROS). Promotes resistance to bacterial pathogens. The polypeptide is GTPase activating protein 1 (Oryza sativa subsp. indica (Rice)).